Consider the following 153-residue polypeptide: Pheromone-binding protein Gp-9 (153 aa).

The signal sequence occupies residues 1-19 (MKTFVLHIFIFALVAFASA). 3 disulfide bridges follow: cysteine 37/cysteine 77, cysteine 73/cysteine 129, and cysteine 118/cysteine 138.

Belongs to the PBP/GOBP family. In terms of assembly, homodimer.

The protein resides in the secreted. In terms of biological role, colony queen number, a major feature of social organization, is associated with worker genotype for Gp-9. Colonies are headed by either a single reproductive queen (monogyne form) or multiple queens (polygyne form). Differences in worker Gp-9 genotypes between social forms may cause differences in workers' abilities to recognize queens and regulate their numbers. This is Pheromone-binding protein Gp-9 from Solenopsis n. sp. (strain JP-2002) (Fire ant).